Consider the following 351-residue polypeptide: MDQSFGNLGAGAGSSSGGSNSKAAATAVSSSSFLQLPLSTASPAYYGAPLALLHHAAAAPSSSQQHQQQQHHHHYARHGAEMSAAEAEAIKAKIVAHPQYSALLAAYLDCQKVGAPPDVLERLTAMAAKLDASAAGRHEPRDPELDQFMEAYCNMLVKYREELTRPIDEAMEFLKRVEAQLDCISGGGGSSSARLSLADGKSEGVGSSEDDMDPNGRENDPPEIDPRAEDKELKYQLLKKYSGYLSSLRQEFSKKKKKGKLPKEARQKLLHWWELHYKWPYPSETEKIALAESTGLDQKQINNWFINQRKRHWKPSEDMPFVMMEGFHPQNAAALYMDGPFMRDGMYRLGS.

Disordered regions lie at residues 1–23 (MDQS…NSKA), 57–82 (AAAP…GAEM), and 187–229 (GGGS…PRAE). Positions 57-68 (AAAPSSSQQHQQ) are enriched in low complexity. Residues 214–229 (PNGRENDPPEIDPRAE) are compositionally biased toward basic and acidic residues. The region spanning 232 to 252 (ELKYQLLKKYSGYLSSLRQEF) is the ELK domain. Residues 253–316 (SKKKKKGKLP…NQRKRHWKPS (64 aa)) constitute a DNA-binding region (homeobox; TALE-type).

It belongs to the TALE/KNOX homeobox family.

The protein localises to the nucleus. Plays a possible role in patterning the placement of lateral organs along the axis of the shoot. Mutations in RS1 alters cell fate and causes unregulated cell division and expansion in the leaf. Probably binds to the DNA sequence 5'-TGAC-3'. The protein is Homeobox protein rough sheath 1 (RS1) of Zea mays (Maize).